The primary structure comprises 513 residues: ATP synthase subunit alpha (513 aa).

169–176 (GDRQTGKT) serves as a coordination point for ATP.

Belongs to the ATPase alpha/beta chains family. In terms of assembly, F-type ATPases have 2 components, CF(1) - the catalytic core - and CF(0) - the membrane proton channel. CF(1) has five subunits: alpha(3), beta(3), gamma(1), delta(1), epsilon(1). CF(0) has three main subunits: a(1), b(2) and c(9-12). The alpha and beta chains form an alternating ring which encloses part of the gamma chain. CF(1) is attached to CF(0) by a central stalk formed by the gamma and epsilon chains, while a peripheral stalk is formed by the delta and b chains.

The protein resides in the cell inner membrane. It carries out the reaction ATP + H2O + 4 H(+)(in) = ADP + phosphate + 5 H(+)(out). Its function is as follows. Produces ATP from ADP in the presence of a proton gradient across the membrane. The alpha chain is a regulatory subunit. The polypeptide is ATP synthase subunit alpha (Cronobacter sakazakii (strain ATCC BAA-894) (Enterobacter sakazakii)).